A 227-amino-acid polypeptide reads, in one-letter code: Cytochrome c oxidase subunit 2 (227 aa).

Topologically, residues 1-14 are mitochondrial intermembrane; sequence MPYPMQLGFQDATS. The chain crosses the membrane as a helical span at residues 15-45; that stretch reads PIMEELTYFHDHTLMIVFLISSLVLYIIILM. The Mitochondrial matrix portion of the chain corresponds to 46 to 59; sequence LTTKLTHTSTMDAQ. A helical transmembrane segment spans residues 60–87; it reads EVETIWTILPAVILVLIALPSLRILYMM. At 88–227 the chain is on the mitochondrial intermembrane side; sequence DEIYNPYLTI…YFEKWSSMMQ (140 aa). Residues histidine 161, cysteine 196, glutamate 198, cysteine 200, histidine 204, and methionine 207 each coordinate Cu cation. Mg(2+) is bound at residue glutamate 198. Tyrosine 218 is modified (phosphotyrosine).

This sequence belongs to the cytochrome c oxidase subunit 2 family. As to quaternary structure, component of the cytochrome c oxidase (complex IV, CIV), a multisubunit enzyme composed of 14 subunits. The complex is composed of a catalytic core of 3 subunits MT-CO1, MT-CO2 and MT-CO3, encoded in the mitochondrial DNA, and 11 supernumerary subunits COX4I, COX5A, COX5B, COX6A, COX6B, COX6C, COX7A, COX7B, COX7C, COX8 and NDUFA4, which are encoded in the nuclear genome. The complex exists as a monomer or a dimer and forms supercomplexes (SCs) in the inner mitochondrial membrane with NADH-ubiquinone oxidoreductase (complex I, CI) and ubiquinol-cytochrome c oxidoreductase (cytochrome b-c1 complex, complex III, CIII), resulting in different assemblies (supercomplex SCI(1)III(2)IV(1) and megacomplex MCI(2)III(2)IV(2)). Found in a complex with TMEM177, COA6, COX18, COX20, SCO1 and SCO2. Interacts with TMEM177 in a COX20-dependent manner. Interacts with COX20. Interacts with COX16. Cu cation is required as a cofactor.

It is found in the mitochondrion inner membrane. It catalyses the reaction 4 Fe(II)-[cytochrome c] + O2 + 8 H(+)(in) = 4 Fe(III)-[cytochrome c] + 2 H2O + 4 H(+)(out). Functionally, component of the cytochrome c oxidase, the last enzyme in the mitochondrial electron transport chain which drives oxidative phosphorylation. The respiratory chain contains 3 multisubunit complexes succinate dehydrogenase (complex II, CII), ubiquinol-cytochrome c oxidoreductase (cytochrome b-c1 complex, complex III, CIII) and cytochrome c oxidase (complex IV, CIV), that cooperate to transfer electrons derived from NADH and succinate to molecular oxygen, creating an electrochemical gradient over the inner membrane that drives transmembrane transport and the ATP synthase. Cytochrome c oxidase is the component of the respiratory chain that catalyzes the reduction of oxygen to water. Electrons originating from reduced cytochrome c in the intermembrane space (IMS) are transferred via the dinuclear copper A center (CU(A)) of subunit 2 and heme A of subunit 1 to the active site in subunit 1, a binuclear center (BNC) formed by heme A3 and copper B (CU(B)). The BNC reduces molecular oxygen to 2 water molecules using 4 electrons from cytochrome c in the IMS and 4 protons from the mitochondrial matrix. The chain is Cytochrome c oxidase subunit 2 (MT-CO2) from Osphranter robustus (Wallaroo).